We begin with the raw amino-acid sequence, 105 residues long: DNA-binding protein HU (105 aa).

Belongs to the bacterial histone-like protein family.

Functionally, histone-like DNA-binding protein which is capable of wrapping DNA to stabilize it, and thus to prevent its denaturation under extreme environmental conditions. This chain is DNA-binding protein HU (hup), found in Treponema pallidum (strain Nichols).